The primary structure comprises 92 residues: Probable Fe(2+)-trafficking protein (92 aa).

Belongs to the Fe(2+)-trafficking protein family.

Its function is as follows. Could be a mediator in iron transactions between iron acquisition and iron-requiring processes, such as synthesis and/or repair of Fe-S clusters in biosynthetic enzymes. The protein is Probable Fe(2+)-trafficking protein of Xanthomonas campestris pv. campestris (strain 8004).